We begin with the raw amino-acid sequence, 338 residues long: Tryptophan--tRNA ligase (338 aa).

ATP contacts are provided by residues 11–13 (QPS) and 19–20 (GN). Residues 12–20 (PSGELSIGN) carry the 'HIGH' region motif. Aspartate 135 is an L-tryptophan binding site. ATP-binding positions include 147-149 (GSD), valine 189, and 198-202 (KMSKS). The 'KMSKS' region signature appears at 198–202 (KMSKS).

It belongs to the class-I aminoacyl-tRNA synthetase family. In terms of assembly, homodimer.

It is found in the cytoplasm. It carries out the reaction tRNA(Trp) + L-tryptophan + ATP = L-tryptophyl-tRNA(Trp) + AMP + diphosphate + H(+). Its function is as follows. Catalyzes the attachment of tryptophan to tRNA(Trp). In Vibrio cholerae serotype O1 (strain ATCC 39315 / El Tor Inaba N16961), this protein is Tryptophan--tRNA ligase.